The primary structure comprises 177 residues: Thaumatin-like protein (177 aa).

The first 26 residues, 1–26, serve as a signal peptide directing secretion; it reads MASPATSSAVLVVVLVATLAAGGANA.

It belongs to the thaumatin family.

It is found in the secreted. This chain is Thaumatin-like protein, found in Oryza sativa subsp. japonica (Rice).